The sequence spans 542 residues: Major facilitator superfamily domain-containing protein 6-like (542 aa).

11 helical membrane passes run 46–66, 89–109, 198–218, 246–266, 272–292, 321–341, 352–372, 381–401, 404–424, 444–464, and 469–489; these read LGLS…LALL, LLSS…GILV, MFFL…PLEW, VGAA…FCRI, FYSY…LPIY, VTVI…LWLM, GICL…AGPL, WMLV…SFLW, WAVM…WWSV, FEAF…GFVV, and VNVL…ALAV.

It belongs to the major facilitator superfamily. MFSD6 family.

The protein localises to the membrane. This Danio rerio (Zebrafish) protein is Major facilitator superfamily domain-containing protein 6-like (mfsd6l).